Reading from the N-terminus, the 291-residue chain is N-acetylmannosamine kinase (291 aa).

ATP is bound by residues Ala5–Lys12 and Gly132–Ser139. Zn(2+) contacts are provided by His156, Cys166, Cys168, and Cys173.

It belongs to the ROK (NagC/XylR) family. NanK subfamily. In terms of assembly, homodimer.

The catalysed reaction is an N-acyl-D-mannosamine + ATP = an N-acyl-D-mannosamine 6-phosphate + ADP + H(+). The protein operates within amino-sugar metabolism; N-acetylneuraminate degradation; D-fructose 6-phosphate from N-acetylneuraminate: step 2/5. Catalyzes the phosphorylation of N-acetylmannosamine (ManNAc) to ManNAc-6-P. In Escherichia coli (strain ATCC 8739 / DSM 1576 / NBRC 3972 / NCIMB 8545 / WDCM 00012 / Crooks), this protein is N-acetylmannosamine kinase.